A 161-amino-acid polypeptide reads, in one-letter code: Cyclic pyranopterin monophosphate synthase (161 aa).

Substrate-binding positions include 76-78 (MCH) and 114-115 (ME). Residue D129 is part of the active site.

It belongs to the MoaC family. In terms of assembly, homohexamer; trimer of dimers.

The enzyme catalyses (8S)-3',8-cyclo-7,8-dihydroguanosine 5'-triphosphate = cyclic pyranopterin phosphate + diphosphate. It functions in the pathway cofactor biosynthesis; molybdopterin biosynthesis. In terms of biological role, catalyzes the conversion of (8S)-3',8-cyclo-7,8-dihydroguanosine 5'-triphosphate to cyclic pyranopterin monophosphate (cPMP). This chain is Cyclic pyranopterin monophosphate synthase, found in Clostridium acetobutylicum (strain ATCC 824 / DSM 792 / JCM 1419 / IAM 19013 / LMG 5710 / NBRC 13948 / NRRL B-527 / VKM B-1787 / 2291 / W).